The following is a 463-amino-acid chain: Glutamate--tRNA ligase (463 aa).

The 'HIGH' region motif lies at 10-20 (PSPTGHLHIGG). Residues 236–240 (KLSKR) carry the 'KMSKS' region motif. K239 contacts ATP.

Belongs to the class-I aminoacyl-tRNA synthetase family. Glutamate--tRNA ligase type 1 subfamily. Monomer.

Its subcellular location is the cytoplasm. The catalysed reaction is tRNA(Glu) + L-glutamate + ATP = L-glutamyl-tRNA(Glu) + AMP + diphosphate. Functionally, catalyzes the attachment of glutamate to tRNA(Glu) in a two-step reaction: glutamate is first activated by ATP to form Glu-AMP and then transferred to the acceptor end of tRNA(Glu). The polypeptide is Glutamate--tRNA ligase (Nitratidesulfovibrio vulgaris (strain DP4) (Desulfovibrio vulgaris)).